A 930-amino-acid chain; its full sequence is Kinesin-like protein KIN-7J (930 aa).

Residues Lys-9–Arg-273 enclose the Kinesin motor domain. Gly-95–Thr-102 is a binding site for ATP. Disordered stretches follow at residues Leu-449 to Asp-569 and Met-655 to Asp-686. Positions Ser-459 to Ser-468 are enriched in low complexity. Composition is skewed to basic and acidic residues over residues Glu-473 to Met-482 and Ala-533 to Asn-558. A compositionally biased stretch (low complexity) spans Thr-666–Thr-681. Lys-805 participates in a covalent cross-link: Glycyl lysine isopeptide (Lys-Gly) (interchain with G-Cter in ubiquitin).

The protein belongs to the TRAFAC class myosin-kinesin ATPase superfamily. Kinesin family. KIN-7 subfamily.

This Arabidopsis thaliana (Mouse-ear cress) protein is Kinesin-like protein KIN-7J.